The following is a 229-amino-acid chain: Non-structural protein P8 (229 aa).

The next 2 helical transmembrane spans lie at 119 to 139 (IIHMTLLIAAVVALLTSVCTL) and 162 to 182 (SLNPMLGVVNLGATFLMMVCA).

The protein belongs to the orbivirus NS3 family. In terms of assembly, forms homooligomers via coiled-coil motif. Interacts with host OPTN; this interaction inhibits innate immune response.

It localises to the host cell membrane. It is found in the host Golgi apparatus. Plays a role in the inhibition of host innate immune response. Interacts with host OPTN and thus inhibits the recruitment of TBK1 to the host Golgi apparatus. In turn, downstream partner IRF3 cannot be activated and IFN-beta production is impaired. In terms of biological role, facilitates viral particle release either by increasing plasma membrane permeability through a viroporin-like activity or by viral budding. The chain is Non-structural protein P8 (Segment-10) from Bluetongue virus 17 (isolate USA) (BTV 17).